Reading from the N-terminus, the 339-residue chain is MRVYYDCDVNVNLIKEKKVAIVGYGAQGHAHALNLKDSGVQNVRIALHSGSMTTKKAEADGFEVMSVAEAVQWADFIMIATPDELQADIYKEHIHDHLRDGAAISFAHGLSIHFGLIKVKKTVDVVMIAPKGAGRAVRSEYQHGRGIPCLIAVEQDVSGNAHDLALSYACGIGGGRSGIMKTTFREECETDLFGEQAVLCGGLVELIRAGFETLTEAGYAPEMAYFECLHEIKIIADLIYECGIANMNYSISNTAEWGEYVSGPRVITHETKAEMKRILKDIQTGKFTSEWIQEYRAGAARFKDMRRLNSNHLIEQTGDKIRSMMALTKSSAPVDKKHS.

The region spanning 1 to 182 is the KARI N-terminal Rossmann domain; that stretch reads MRVYYDCDVN…GGGRSGIMKT (182 aa). Residues 24–27, Ser-51, Thr-53, and 83–86 each bind NADP(+); these read YGAQ and DELQ. His-108 is an active-site residue. Gly-134 provides a ligand contact to NADP(+). In terms of domain architecture, KARI C-terminal knotted spans 183-328; it reads TFREECETDL…DKIRSMMALT (146 aa). Residues Asp-191, Glu-195, Glu-227, and Glu-231 each contribute to the Mg(2+) site. Ser-252 provides a ligand contact to substrate.

This sequence belongs to the ketol-acid reductoisomerase family. Mg(2+) serves as cofactor.

It carries out the reaction (2R)-2,3-dihydroxy-3-methylbutanoate + NADP(+) = (2S)-2-acetolactate + NADPH + H(+). The catalysed reaction is (2R,3R)-2,3-dihydroxy-3-methylpentanoate + NADP(+) = (S)-2-ethyl-2-hydroxy-3-oxobutanoate + NADPH + H(+). The protein operates within amino-acid biosynthesis; L-isoleucine biosynthesis; L-isoleucine from 2-oxobutanoate: step 2/4. It participates in amino-acid biosynthesis; L-valine biosynthesis; L-valine from pyruvate: step 2/4. Its function is as follows. Involved in the biosynthesis of branched-chain amino acids (BCAA). Catalyzes an alkyl-migration followed by a ketol-acid reduction of (S)-2-acetolactate (S2AL) to yield (R)-2,3-dihydroxy-isovalerate. In the isomerase reaction, S2AL is rearranged via a Mg-dependent methyl migration to produce 3-hydroxy-3-methyl-2-ketobutyrate (HMKB). In the reductase reaction, this 2-ketoacid undergoes a metal-dependent reduction by NADPH to yield (R)-2,3-dihydroxy-isovalerate. The sequence is that of Ketol-acid reductoisomerase (NADP(+)) from Bartonella bacilliformis (strain ATCC 35685 / KC583 / Herrer 020/F12,63).